A 308-amino-acid polypeptide reads, in one-letter code: MQPSGHRLRDIEHHPLLTDNDNYDSASSSSSETDMADRVWFIRDGCGMVCAVMTWLLVVYADFVVTFVMLLPSKDFWYSVVNGVLFNCLAVLALSSHLRTMLTDPGAVPKGNATKEYMESLQLKPGEVIYKCPKCCCIKPERAHHCSICKRCIRKMDHHCPWVNNCVGEKNQRFFVLFTMYIALSSVHALILCGLQFISCVRGQWTECSDFSPPITVILLVFLCLEGLLFFTFTAVMFGTQIHSICNDETEIERLKSEKPTWERRLRWEGMKSVFGGPPSLLWMNPFVGFRLRRLQMRTRKGGPEFSV.

Residues 1 to 50 (MQPSGHRLRDIEHHPLLTDNDNYDSASSSSSETDMADRVWFIRDGCGMVC) lie on the Cytoplasmic side of the membrane. A helical transmembrane segment spans residues 51-71 (AVMTWLLVVYADFVVTFVMLL). Residues 72–75 (PSKD) lie on the Lumenal side of the membrane. The helical transmembrane segment at 76 to 96 (FWYSVVNGVLFNCLAVLALSS) threads the bilayer. The Cytoplasmic segment spans residues 97–173 (HLRTMLTDPG…NNCVGEKNQR (77 aa)). The DHHC domain occupies 130–180 (YKCPKCCCIKPERAHHCSICKRCIRKMDHHCPWVNNCVGEKNQRFFVLFTM). Catalysis depends on Cys160, which acts as the S-palmitoyl cysteine intermediate. A helical transmembrane segment spans residues 174–194 (FFVLFTMYIALSSVHALILCG). Over 195-217 (LQFISCVRGQWTECSDFSPPITV) the chain is Lumenal. The helical transmembrane segment at 218–238 (ILLVFLCLEGLLFFTFTAVMF) threads the bilayer. The Cytoplasmic segment spans residues 239–308 (GTQIHSICND…TRKGGPEFSV (70 aa)).

It belongs to the DHHC palmitoyltransferase family. Homooligomers. Heterooligomers with ZDHHC3. In terms of processing, autopalmitoylated. In terms of tissue distribution, ubiquitously expressed, with highest levels in liver, kidney and brain. Expressed in all brain regions.

It localises to the golgi apparatus membrane. The enzyme catalyses L-cysteinyl-[protein] + hexadecanoyl-CoA = S-hexadecanoyl-L-cysteinyl-[protein] + CoA. It catalyses the reaction L-cysteinyl-[protein] + tetradecanoyl-CoA = S-tetradecanoyl-L-cysteinyl-[protein] + CoA. It carries out the reaction L-cysteinyl-[protein] + octadecanoyl-CoA = S-octadecanoyl-L-cysteinyl-[protein] + CoA. Its function is as follows. Golgi-localized palmitoyltransferase that catalyzes the addition of palmitate onto various protein substrates and therefore functions in several unrelated biological processes. Has no stringent fatty acid selectivity and in addition to palmitate can also transfer onto target proteins myristate from tetradecanoyl-CoA and stearate from octadecanoyl-CoA. Palmitoylates sex steroid hormone receptors, including ESR1, PGR and AR, thereby regulating their targeting to the plasma membrane and their function in rapid intracellular signaling upon binding of sex hormones. Palmitoylates GNAQ, a heterotrimeric G protein, regulating its dynamic localization at the plasma membrane and is thereby involved in GNAQ-dependent G protein-coupled receptor signaling pathways. Also functions in ligand-induced cell death by regulating the FAS signaling pathway through the palmitoylation and stabilization of the receptor at the plasma membrane. In epithelial cells, palmitoylates SCRIB and regulates its localization to the plasma membrane, regulating indirectly cell polarity and differentiation. Also palmitoylates JAM3 and promotes its expression at tight junctions and regulates its function in cell migration. Palmitoylates the glucose transporter GLUT4/SLC2A4 and controls the insulin-dependent translocation of GLUT4 to the plasma membrane. In brain, could also palmitoylate SNAP25 and DLG4/PSD95. Could also palmitoylate DNAJC5 and regulate its localization to the Golgi membrane. Could also palmitoylate NCDN. May play a role in follicle stimulation hormone (FSH) activation of testicular Sertoli cells. Activates pyroptosis by catalyzing palmitoylation of gasdermin-D (GSDMD). This is Palmitoyltransferase ZDHHC7 from Mus musculus (Mouse).